Here is a 1284-residue protein sequence, read N- to C-terminus: Collagen alpha-1(XX) chain (1284 aa).

The signal sequence occupies residues 1–22; that stretch reads MSSGDPAHLGLCLWLWLGATLG. The Fibronectin type-III 1 domain maps to 28–119; sequence ASGLLRLAVL…EFVIEDLKSS (92 aa). The segment at 122–171 is disordered; it reads DRSSQRPLGSGAPEPTPSHTGSPDPEQASEPQVAFTPSQDPRTPAGPQFR. Positions 179–354 constitute a VWFA domain; that stretch reads DMVFLVDGSW…GALAGLLSRL (176 aa). Fibronectin type-III domains follow at residues 379–468, 469–559, 560–647, 649–738, and 743–833; these read APTS…APLP, PPRA…TLAP, PRHL…TKKA, SPSQ…TPST, and PPSN…ACPA. A glycan (N-linked (GlcNAc...) asparagine) is linked at asparagine 607. A Laminin G-like domain is found at 842–1037; sequence GFDLMVAFSL…LQMLQIVCSD (196 aa). Disordered stretches follow at residues 1065 to 1190 and 1212 to 1284; these read SCSS…EKGE and SFHE…GLWE. A compositionally biased stretch (pro residues) spans 1071-1082; the sequence is PGPPGPQGPPGL. Collagen-like domains follow at residues 1071–1127 and 1133–1190; these read PGPP…IPGR and PKGM…EKGE. Low complexity-rich tracts occupy residues 1112–1125 and 1166–1181; these read LPGL…QGIP and ERGP…LPGP. Over residues 1271-1284 the composition is skewed to polar residues; the sequence is SPGQQGASTQGLWE.

In terms of tissue distribution, high expression in heart, lung, liver, skeletal muscle, kidney, pancreas, spleen, testis, ovary, subthalamic nucleus and fetal liver. Weak expression in other tissues tested.

It is found in the secreted. The protein localises to the extracellular space. Its function is as follows. Probable collagen protein. The protein is Collagen alpha-1(XX) chain (COL20A1) of Homo sapiens (Human).